We begin with the raw amino-acid sequence, 169 residues long: Small ribosomal subunit protein bS18c (169 aa).

Positions 1-61 are disordered; it reads MYTSKQPFLK…RRPRIGPGDR (61 aa). Over residues 27 to 55 the composition is skewed to basic residues; sequence QTFRKSKQTFRKFKQPFRKSKQPFRRRPR.

This sequence belongs to the bacterial ribosomal protein bS18 family. In terms of assembly, part of the 30S ribosomal subunit.

It localises to the plastid. The protein resides in the chloroplast. In Agrostis stolonifera (Creeping bentgrass), this protein is Small ribosomal subunit protein bS18c.